Consider the following 435-residue polypeptide: Astacin-like metalloendopeptidase (435 aa).

A signal peptide spans 1-23 (MGIMGSLWPWILTMLSLLGLSMG). In terms of domain architecture, Peptidase M12A spans 85 to 282 (RLLSVTNNKW…TRVCRLYNCS (198 aa)). Disulfide bonds link cysteine 132-cysteine 281 and cysteine 153-cysteine 172. Histidine 182 contacts Zn(2+). Glutamate 183 is a catalytic residue. 2 residues coordinate Zn(2+): histidine 186 and histidine 192. Over residues 318 to 329 (SEESGSSAPSGS) the composition is skewed to low complexity. The interval 318–356 (SEESGSSAPSGSRTGGQSIAGLGNSQQGWEHPPQSTFSV) is disordered. A compositionally biased stretch (polar residues) spans 340 to 355 (GNSQQGWEHPPQSTFS).

Interacts (via N-terminal domain) with SPACA3; the interaction occurs during fertilization. It depends on Zn(2+) as a cofactor. In terms of tissue distribution, ovary-specific. Expressed in secondary, antral and Graafian follicle oocytes. Expressed in the egg cells. Not detected in two-cell embryos. Not detected in naked oocytes, oocytes in primordial or unilaminar primary follicles, or in any other ovarian cells at pre-pubertal, pubertal or adult stages (at protein level). Ovary-specific.

It localises to the cytoplasm. Its subcellular location is the cell membrane. The protein localises to the cytoplasmic vesicle. It is found in the secretory vesicle. The protein resides in the cortical granule. Its activity is regulated as follows. Inhibited by wide spectrum metalloproteinase inhibitor batimastat (BB-94). Also inhibited by EDTA. Oocyte-specific oolemmal receptor involved in sperm and egg adhesion and fertilization. Plays a role in the polyspermy inhibition. Probably acts as a protease for the post-fertilization cleavage of ZP2. Cleaves the sperm-binding ZP2 at the surface of the zona pellucida after fertilization and cortical granule exocytosis, rendering the zona pellucida unable to support further sperm binding. The sequence is that of Astacin-like metalloendopeptidase from Mus musculus (Mouse).